The primary structure comprises 297 residues: HTH-type transcriptional regulator ArgP (297 aa).

An HTH lysR-type domain is found at 4 to 60; the sequence is PDYRTLQALDAVIRERGFERAAQKLCITQSAVSQRIKQLENMFGQPLLVRTVPPRPT. A DNA-binding region (H-T-H motif) is located at residues 21–40; the sequence is FERAAQKLCITQSAVSQRIK.

Belongs to the LysR transcriptional regulatory family. As to quaternary structure, homodimer.

Its function is as follows. Controls the transcription of genes involved in arginine and lysine metabolism. In Escherichia fergusonii (strain ATCC 35469 / DSM 13698 / CCUG 18766 / IAM 14443 / JCM 21226 / LMG 7866 / NBRC 102419 / NCTC 12128 / CDC 0568-73), this protein is HTH-type transcriptional regulator ArgP.